The chain runs to 523 residues: MDTSLFSLFVPILVFVFIALFKKSKKPKHVKAPAPSGAWPIIGHLHLLSGKEQLLYRTLGKMADQYGPAMSLRLGSSETFVVSSFEVAKDCFTVNDKALASRPITAAAKHMGYDCAVFGFAPYSAFWREMRKIATLELLSNRRLQMLKHVRVSEISMVMQDLYSLWVKKGGSEPVMVDLKSWLEDMSLNMMVRMVAGKRYFGGGSLSPEDAEEARQCRKGVANFFHLVGIFTVSDAFPKLGWFDFQGHEKEMKQTGRELDVILERWIENHRQQRKVSGTKHNDSDFVDVMLSLAEQGKFSHLQHDAITSIKSTCLALILGGSETSPSTLTWAISLLLNNKDMLKKAQDEIDIHVGRDRNVEDSDIENLVYIQAIIKETLRLYPAGPLLGHREAIEDCTVAGYNVRRGTRMLVNVWKIQRDPRVYMEPNEFRPERFITGEAKEFDVRGQNFELMPFGSGRRSCPGSSLAMQVLHLGLARFLQSFDVKTVMDMPVDMTESPGLTIPKATPLEILISPRLKEGLYV.

Residues 1-21 form a helical membrane-spanning segment; it reads MDTSLFSLFVPILVFVFIALF. Residue Cys462 coordinates heme.

This sequence belongs to the cytochrome P450 family. It depends on heme as a cofactor.

The protein localises to the membrane. It carries out the reaction xanthotoxin + reduced [NADPH--hemoprotein reductase] + O2 = 5-hydroxyxanthotoxin + oxidized [NADPH--hemoprotein reductase] + H2O + 2 H(+). The catalysed reaction is indole-3-carbonyl nitrile + reduced [NADPH--hemoprotein reductase] + O2 = 4-hydroxy-indole-3-carbonyl nitrile + oxidized [NADPH--hemoprotein reductase] + H2O + H(+). In terms of biological role, involved in the biosynthetic pathway to 4-hydroxyindole-3-carbonyl nitrile (4-OH-ICN), a cyanogenic metabolite required for inducible pathogen defense. Converts indole-3-carbonyl nitrile (ICN) into 4-OH-ICN. Can hydroxylate xanthotoxin (8-methoxypsoralen) to form 5-hydroxyxanthotoxin (5-hydroxy-8-methoxypsoralen) in vivo and in vitro. The chain is Xanthotoxin 5-hydroxylase CYP82C2 from Arabidopsis thaliana (Mouse-ear cress).